Here is a 279-residue protein sequence, read N- to C-terminus: Thioredoxin domain-containing protein plp1 (279 aa).

Residues 56–70 (RKEDTQDYNEPELHN) show a composition bias toward basic and acidic residues. The disordered stretch occupies residues 56–75 (RKEDTQDYNEPELHNSNDPT). Residues 137 to 248 (FLTVENEREV…LEFRLLKSSA (112 aa)) form the Thioredoxin domain. A compositionally biased stretch (basic and acidic residues) spans 254–267 (EESSSNKSIYHDEL). A disordered region spans residues 254–279 (EESSSNKSIYHDELQNNQSDDSDFFE). A phosphoserine mark is found at Ser272 and Ser275.

Belongs to the phosducin family.

Its subcellular location is the cytoplasm. It localises to the nucleus. Its function is as follows. Inhibits early G-protein signaling events following pheromone stimulation. May help create heterodimerizable beta-tubulin by facilitating the efficient transfer of nascent beta-tubulin polypeptides to the folding apparatus. This is Thioredoxin domain-containing protein plp1 (plp1) from Schizosaccharomyces pombe (strain 972 / ATCC 24843) (Fission yeast).